Here is a 183-residue protein sequence, read N- to C-terminus: Caltractin ICL1f (183 aa).

The segment covering Met-1–Gln-19 has biased composition (low complexity). The tract at residues Met-1 to Glu-30 is disordered. EF-hand domains follow at residues Glu-39 to Glu-74, Ala-75 to Glu-110, Asp-112 to Thr-147, and Met-148 to Ala-183. Asp-52, Asp-54, Thr-56, Ser-58, Glu-63, Asp-88, Asp-90, Ser-92, Gln-94, and Glu-99 together coordinate Ca(2+).

The protein belongs to the centrin family. Monomer.

The protein localises to the cytoplasm. The protein resides in the cytoskeleton. Functionally, plays a fundamental role in microtubule organizing center structure and function. Component of the infraciliary lattice (ICL) and the ciliary basal bodies. In Paramecium tetraurelia, this protein is Caltractin ICL1f (Icl1f).